The chain runs to 1678 residues: Serine/threonine-protein kinase pakD (1678 aa).

Low complexity predominate over residues 1-15 (MSRLQPQQQQRGRSS). Disordered regions lie at residues 1–73 (MSRL…NNKF), 180–224 (NSNS…PNKN), 262–428 (QLSS…NNNN), and 442–489 (KRKS…SQSS). Positions 17-34 (FKDNFQIQKPLQSLTPSE) are enriched in polar residues. Composition is skewed to low complexity over residues 35-73 (QQQQ…NNKF) and 180-214 (NSNS…NNNN). In terms of domain architecture, Calponin-homology (CH) spans 82–189 (KNVENDIKKW…NSNSSKTTTN (108 aa)). Polar residues predominate over residues 215–224 (RAIITSPNKN). 2 stretches are compositionally biased toward low complexity: residues 276-359 (NNNN…NINN) and 399-428 (NNNN…NNNN). Residues 460–472 (DSSDSSDSSDSDS) show a composition bias toward acidic residues. Coiled coils occupy residues 512 to 542 (KQDK…KKLL) and 570 to 628 (TRQI…YANT). 3 stretches are compositionally biased toward low complexity: residues 631 to 654 (SSNS…INGS), 662 to 671 (NSSTSKGTLS), and 695 to 713 (NSHQ…QTTS). Disordered regions lie at residues 631–672 (SSNS…TLSR) and 693–722 (PVNS…ASYN). The stretch at 752–862 (VSATLQQKQQ…QNQQINNLID (111 aa)) forms a coiled coil. The Phorbol-ester/DAG-type zinc finger occupies 1141-1197 (PHSFVLKSFRIISECNYCRQYIWGVRGIVAREAFECVGCKYKTHKKCLKEASEKTFC). The region spanning 1202 to 1215 (VGAPFNVKHEMHVG) is the CRIB domain. Disordered stretches follow at residues 1267–1292 (LTNN…QQNQ) and 1323–1346 (NNTY…PNNN). A coiled-coil region spans residues 1269–1309 (NNSNNNNNNNNSNNNLQQQQQQNQQLKQKLNITNNQQNNTI). The Protein kinase domain occupies 1376-1647 (YKVREVVGGG…AHYLLRHPFL (272 aa)). ATP contacts are provided by residues 1382 to 1390 (VGGGSTGKV) and K1405. D1515 acts as the Proton acceptor in catalysis.

This sequence belongs to the protein kinase superfamily. STE Ser/Thr protein kinase family. STE20 subfamily. Requires Mg(2+) as cofactor.

The enzyme catalyses L-seryl-[protein] + ATP = O-phospho-L-seryl-[protein] + ADP + H(+). It catalyses the reaction L-threonyl-[protein] + ATP = O-phospho-L-threonyl-[protein] + ADP + H(+). This Dictyostelium discoideum (Social amoeba) protein is Serine/threonine-protein kinase pakD.